Reading from the N-terminus, the 446-residue chain is MRLVTLLSGLVSLVSVFGLELDLDDYASLQNATALVAYGLMDYYTGDQYGKTVGMFSDPYYWWQAGGAWGCMLDYWYFMQNDTYNDKIMAALLHQTGDNNDYVPLNQSTTEGNDDQAFWGIAVMQAAERKFPNPPDDKPQWLYLTQAVFNTMALRWDSETCGGGLRWQIFVWNSGYDYKNTVSNGALFHIAARLARYTGNQSYVDWAERVYDWMEDVHLIDNGTYRYVYDGVSINDNCTTVTKYQWTYNQGLMLSGSAYLFNMTGSDLWHERTHAFLNASRVFFNNSILYEAACQGPNTCNTDQRSFKAYFARFLGSTAELVPETRQQIMTWLNTSALAAAKSCSGGTDGHTCGLNWFRDDWDGMYGLGEQMAALEVMVNTQALKRAPPYNATNGGNSTGDGAAGTKPHPTNLAPLHITGGSRAGAGIITAIIGISIIACALWLVY.

The signal sequence occupies residues 1 to 18 (MRLVTLLSGLVSLVSVFG). Asn-31, Asn-81, Asn-106, Asn-200, Asn-222, Asn-237, Asn-262, Asn-278, Asn-285, Asn-334, Asn-391, and Asn-397 each carry an N-linked (GlcNAc...) asparagine glycan. The interval 389 to 408 (PYNATNGGNSTGDGAAGTKP) is disordered. A lipid anchor (GPI-anchor amidated serine) is attached at Ser-422. Positions 423–446 (RAGAGIITAIIGISIIACALWLVY) are cleaved as a propeptide — removed in mature form.

It belongs to the glycosyl hydrolase 76 family.

The protein localises to the secreted. It localises to the cell wall. Its subcellular location is the cell membrane. The enzyme catalyses Random hydrolysis of (1-&gt;6)-alpha-D-mannosidic linkages in unbranched (1-&gt;6)-mannans.. Its function is as follows. Required for normal synthesis of the cell wall. This chain is Mannan endo-1,6-alpha-mannosidase DCW1 (DCW1), found in Candida glabrata (strain ATCC 2001 / BCRC 20586 / JCM 3761 / NBRC 0622 / NRRL Y-65 / CBS 138) (Yeast).